Here is a 461-residue protein sequence, read N- to C-terminus: L-seryl-tRNA(Sec) selenium transferase (461 aa).

At K294 the chain carries N6-(pyridoxal phosphate)lysine.

Belongs to the SelA family. Pyridoxal 5'-phosphate is required as a cofactor.

The protein resides in the cytoplasm. The catalysed reaction is L-seryl-tRNA(Sec) + selenophosphate + H(+) = L-selenocysteinyl-tRNA(Sec) + phosphate. The protein operates within aminoacyl-tRNA biosynthesis; selenocysteinyl-tRNA(Sec) biosynthesis; selenocysteinyl-tRNA(Sec) from L-seryl-tRNA(Sec) (bacterial route): step 1/1. In terms of biological role, converts seryl-tRNA(Sec) to selenocysteinyl-tRNA(Sec) required for selenoprotein biosynthesis. This is L-seryl-tRNA(Sec) selenium transferase from Haemophilus influenzae (strain ATCC 51907 / DSM 11121 / KW20 / Rd).